We begin with the raw amino-acid sequence, 254 residues long: UPF0328 protein ECU01_0070/ECU01_1540/ECU02_1570/ECU04_0080/ECU08_2100 (254 aa).

It belongs to the UPF0328 family.

In Encephalitozoon cuniculi (strain GB-M1) (Microsporidian parasite), this protein is UPF0328 protein ECU01_0070/ECU01_1540/ECU02_1570/ECU04_0080/ECU08_2100.